Reading from the N-terminus, the 429-residue chain is Adenylosuccinate synthetase (429 aa).

GTP-binding positions include 12–18 (GDEGKGK) and 40–42 (GHT). Asp13 functions as the Proton acceptor in the catalytic mechanism. Mg(2+) is bound by residues Asp13 and Gly40. Residues 13–16 (DEGK), 38–41 (NAGH), Thr128, Arg142, Gln223, Thr238, and Arg302 contribute to the IMP site. His41 serves as the catalytic Proton donor. Position 298 to 304 (298 to 304 (VNTGRPR)) interacts with substrate. GTP is bound by residues Arg304, 330 to 332 (KLD), and 412 to 414 (GVG).

The protein belongs to the adenylosuccinate synthetase family. As to quaternary structure, homodimer. Mg(2+) is required as a cofactor.

It is found in the cytoplasm. It catalyses the reaction IMP + L-aspartate + GTP = N(6)-(1,2-dicarboxyethyl)-AMP + GDP + phosphate + 2 H(+). The protein operates within purine metabolism; AMP biosynthesis via de novo pathway; AMP from IMP: step 1/2. Functionally, plays an important role in the de novo pathway of purine nucleotide biosynthesis. Catalyzes the first committed step in the biosynthesis of AMP from IMP. This chain is Adenylosuccinate synthetase, found in Pseudarthrobacter chlorophenolicus (strain ATCC 700700 / DSM 12829 / CIP 107037 / JCM 12360 / KCTC 9906 / NCIMB 13794 / A6) (Arthrobacter chlorophenolicus).